The chain runs to 292 residues: MNIVLKLSSNACQQLSEKYKSYEQTSKNPYIRFFAKVGKTSISVYTSGKVVFQGSDAEKIASEFGHVAQVVPKKQTNLIGTDEVGNGSYFGGLMVTASFVSDNHLKFLKEMGVADSKKLTDEKICQIAPKLIEEIPHVALVVEPEKYNEVIASGYNAVSIKVALHNQAIYLLEKQLGSQPESIVIDAFTTEANYKKYVSAEKNHPLTNVTLLTKAEDQFLAVAVSSIISRYKFLENLKKLSKESSFTLPSGAENLSDKVAAQIIKSQGIDALNHLAKLHFANTQKAMKIAQL.

The RNase H type-2 domain maps to 76–292 (TNLIGTDEVG…TQKAMKIAQL (217 aa)). Residues aspartate 82, glutamate 83, and aspartate 186 each contribute to the a divalent metal cation site.

Belongs to the RNase HII family. RnhC subfamily. The cofactor is Mn(2+). Requires Mg(2+) as cofactor.

The protein resides in the cytoplasm. It catalyses the reaction Endonucleolytic cleavage to 5'-phosphomonoester.. Functionally, endonuclease that specifically degrades the RNA of RNA-DNA hybrids. The protein is Ribonuclease HIII of Lactococcus lactis subsp. cremoris (strain SK11).